The sequence spans 316 residues: Protoheme IX farnesyltransferase (316 aa).

Transmembrane regions (helical) follow at residues 28-48 (WLALLKPRVISLVVFTGAAGM), 57-77 (IPIGLITILCICIGAGAAGAI), 106-126 (AALVYGVVLSVLSVIVLWLAT), 129-149 (LAADILAFSIFFYSVIYTMWL), 156-176 (NIVIGGAAGAFPPMIGWAATM), 179-199 (MAVLPVAMFAIVFLWTPPHFW), 230-250 (ILIYTFILTAVSLVPSFVHEV), 254-274 (YTVVTSLLDLGFILCAFRVLM), and 296-316 (YSLVYLFLLFCGLLVDRVLIG).

It belongs to the UbiA prenyltransferase family. Protoheme IX farnesyltransferase subfamily.

The protein localises to the cell inner membrane. It catalyses the reaction heme b + (2E,6E)-farnesyl diphosphate + H2O = Fe(II)-heme o + diphosphate. It functions in the pathway porphyrin-containing compound metabolism; heme O biosynthesis; heme O from protoheme: step 1/1. In terms of biological role, converts heme B (protoheme IX) to heme O by substitution of the vinyl group on carbon 2 of heme B porphyrin ring with a hydroxyethyl farnesyl side group. This chain is Protoheme IX farnesyltransferase, found in Gluconobacter oxydans (strain 621H) (Gluconobacter suboxydans).